Here is a 235-residue protein sequence, read N- to C-terminus: Ubiquinone/menaquinone biosynthesis C-methyltransferase UbiE (235 aa).

Residues Thr-60 and Asp-81 each coordinate S-adenosyl-L-methionine.

This sequence belongs to the class I-like SAM-binding methyltransferase superfamily. MenG/UbiE family.

It catalyses the reaction a 2-demethylmenaquinol + S-adenosyl-L-methionine = a menaquinol + S-adenosyl-L-homocysteine + H(+). The enzyme catalyses a 2-methoxy-6-(all-trans-polyprenyl)benzene-1,4-diol + S-adenosyl-L-methionine = a 5-methoxy-2-methyl-3-(all-trans-polyprenyl)benzene-1,4-diol + S-adenosyl-L-homocysteine + H(+). It participates in quinol/quinone metabolism; menaquinone biosynthesis; menaquinol from 1,4-dihydroxy-2-naphthoate: step 2/2. It functions in the pathway cofactor biosynthesis; ubiquinone biosynthesis. Its function is as follows. Methyltransferase required for the conversion of demethylmenaquinol (DMKH2) to menaquinol (MKH2) and the conversion of 2-polyprenyl-6-methoxy-1,4-benzoquinol (DDMQH2) to 2-polyprenyl-3-methyl-6-methoxy-1,4-benzoquinol (DMQH2). The protein is Ubiquinone/menaquinone biosynthesis C-methyltransferase UbiE of Geotalea uraniireducens (strain Rf4) (Geobacter uraniireducens).